We begin with the raw amino-acid sequence, 264 residues long: Thymidylate synthase (264 aa).

R21 contributes to the dUMP binding site. H51 is a (6R)-5,10-methylene-5,6,7,8-tetrahydrofolate binding site. 126–127 (RR) is a binding site for dUMP. Catalysis depends on C146, which acts as the Nucleophile. Residues 166–169 (RSCD), N177, and 207–209 (HLY) contribute to the dUMP site. D169 contributes to the (6R)-5,10-methylene-5,6,7,8-tetrahydrofolate binding site. Position 263 (A263) interacts with (6R)-5,10-methylene-5,6,7,8-tetrahydrofolate.

This sequence belongs to the thymidylate synthase family. Bacterial-type ThyA subfamily. Homodimer.

It is found in the cytoplasm. It catalyses the reaction dUMP + (6R)-5,10-methylene-5,6,7,8-tetrahydrofolate = 7,8-dihydrofolate + dTMP. It functions in the pathway pyrimidine metabolism; dTTP biosynthesis. In terms of biological role, catalyzes the reductive methylation of 2'-deoxyuridine-5'-monophosphate (dUMP) to 2'-deoxythymidine-5'-monophosphate (dTMP) while utilizing 5,10-methylenetetrahydrofolate (mTHF) as the methyl donor and reductant in the reaction, yielding dihydrofolate (DHF) as a by-product. This enzymatic reaction provides an intracellular de novo source of dTMP, an essential precursor for DNA biosynthesis. This is Thymidylate synthase from Hamiltonella defensa subsp. Acyrthosiphon pisum (strain 5AT).